We begin with the raw amino-acid sequence, 185 residues long: Tetratricopeptide repeat protein 36 homolog (185 aa).

3 TPR repeats span residues 53-86, 88-119, and 125-158; these read SREL…AQRA, VLNN…ANDQ, and CHAH…GSKF.

This sequence belongs to the TTC36 family.

This is Tetratricopeptide repeat protein 36 homolog from Drosophila melanogaster (Fruit fly).